The sequence spans 322 residues: Elongation factor Ts, mitochondrial (322 aa).

It belongs to the EF-Ts family.

Its subcellular location is the mitochondrion. Its function is as follows. Associates with the EF-Tu.GDP complex and induces the exchange of GDP to GTP. It remains bound to the aminoacyl-tRNA.EF-Tu.GTP complex up to the GTP hydrolysis stage on the ribosome. This chain is Elongation factor Ts, mitochondrial, found in Chlamydomonas reinhardtii (Chlamydomonas smithii).